We begin with the raw amino-acid sequence, 393 residues long: Chalcone synthase (393 aa).

Residue Cys164 is part of the active site.

It belongs to the thiolase-like superfamily. Chalcone/stilbene synthases family.

It catalyses the reaction (E)-4-coumaroyl-CoA + 3 malonyl-CoA + 3 H(+) = 2',4,4',6'-tetrahydroxychalcone + 3 CO2 + 4 CoA. The protein operates within secondary metabolite biosynthesis; flavonoid biosynthesis. Functionally, the primary product of this enzyme is 4,2',4',6'-tetrahydroxychalcone (also termed naringenin-chalcone or chalcone) which can under specific conditions spontaneously isomerize into naringenin. The sequence is that of Chalcone synthase (CHS) from Vitis vinifera (Grape).